Here is a 102-residue protein sequence, read N- to C-terminus: Small ribosomal subunit protein uS10 (102 aa).

Belongs to the universal ribosomal protein uS10 family. Part of the 30S ribosomal subunit.

Its function is as follows. Involved in the binding of tRNA to the ribosomes. The protein is Small ribosomal subunit protein uS10 of Chloroflexus aurantiacus (strain ATCC 29366 / DSM 635 / J-10-fl).